Here is an 875-residue protein sequence, read N- to C-terminus: Valine--tRNA ligase (875 aa).

Residues 44–54 carry the 'HIGH' region motif; that stretch reads PNVTGKLHLGH. The 'KMSKS' region signature appears at 520–524; that stretch reads KMSKS. An ATP-binding site is contributed by Lys-523. Residues 804–875 adopt a coiled-coil conformation; that stretch reads LEGLINIEEE…VRARLAQLKQ (72 aa).

It belongs to the class-I aminoacyl-tRNA synthetase family. ValS type 1 subfamily. As to quaternary structure, monomer.

The protein localises to the cytoplasm. It carries out the reaction tRNA(Val) + L-valine + ATP = L-valyl-tRNA(Val) + AMP + diphosphate. Catalyzes the attachment of valine to tRNA(Val). As ValRS can inadvertently accommodate and process structurally similar amino acids such as threonine, to avoid such errors, it has a 'posttransfer' editing activity that hydrolyzes mischarged Thr-tRNA(Val) in a tRNA-dependent manner. This chain is Valine--tRNA ligase, found in Anoxybacillus flavithermus (strain DSM 21510 / WK1).